The sequence spans 230 residues: Transcriptional regulatory protein CitT (230 aa).

Residues 6–124 (KVLIIEDDFR…VLHQRLDAYV (119 aa)) form the Response regulatory domain. D59 bears the 4-aspartylphosphate mark. The H-T-H motif DNA-binding region spans 184-203 (AMEGARLIGASRSTVRRYFE).

In terms of processing, phosphorylated by CitS.

It localises to the cytoplasm. Member of the two-component regulatory system CitT/CitS. This is Transcriptional regulatory protein CitT (citT) from Halalkalibacterium halodurans (strain ATCC BAA-125 / DSM 18197 / FERM 7344 / JCM 9153 / C-125) (Bacillus halodurans).